Here is a 572-residue protein sequence, read N- to C-terminus: Sulfate adenylyltransferase (572 aa).

The N-terminal stretch occupies residues 1–169 (MANAPHGGVL…IEAVNKLNHY (169 aa)). The interval 170–393 (DYVALRYTPA…LRESNPPRAT (224 aa)) is catalytic. Q197 is a sulfate binding site. Residues 197-200 (QTRN) and 291-294 (GRDH) contribute to the ATP site. Catalysis depends on residues T198, R199, and N200. Residue R199 coordinates sulfate. Residue A295 participates in sulfate binding. V333 provides a ligand contact to ATP. The tract at residues 394 to 572 (QGFTIFLTGY…LESQGFLERQ (179 aa)) is allosteric regulation domain; adenylyl-sulfate kinase-like. Residues 433-436 (DTVR), R450, 476-477 (IA), and R514 each bind 3'-phosphoadenylyl sulfate.

It in the N-terminal section; belongs to the sulfate adenylyltransferase family. This sequence in the C-terminal section; belongs to the APS kinase family. Homohexamer. Dimer of trimers.

Its subcellular location is the cytoplasm. The enzyme catalyses sulfate + ATP + H(+) = adenosine 5'-phosphosulfate + diphosphate. Its pathway is sulfur metabolism; hydrogen sulfide biosynthesis; sulfite from sulfate: step 1/3. Allosterically inhibited by 3'-phosphoadenosine 5'-phosphosulfate (PAPS). In terms of biological role, catalyzes the first intracellular reaction of sulfate assimilation, forming adenosine-5'-phosphosulfate (APS) from inorganic sulfate and ATP. Plays an important role in sulfate activation as a component of the biosynthesis pathway of sulfur-containing amino acids. In Penicillium chrysogenum (Penicillium notatum), this protein is Sulfate adenylyltransferase.